The sequence spans 101 residues: UPF0473 protein STER_1939 (101 aa).

The protein belongs to the UPF0473 family.

This is UPF0473 protein STER_1939 from Streptococcus thermophilus (strain ATCC BAA-491 / LMD-9).